An 829-amino-acid polypeptide reads, in one-letter code: Cation/H(+) antiporter 14 (829 aa).

12 helical membrane passes run 48 to 68 (YAMP…RLLY), 77 to 97 (GMIS…FGQS), 117 to 137 (SNLG…ASII), 145 to 165 (ILIG…TVLF), 180 to 200 (ISTV…TVLA), 215 to 235 (NCSI…RMFL), 240 to 260 (LASV…FFVC), 281 to 301 (IPFF…EVLG), 329 to 349 (LEMF…GLQT), 361 to 383 (IIEA…ASAY), 392 to 412 (FSLA…CVMW), and 425 to 445 (LLII…VCLY). A Phosphoserine modification is found at S827.

The protein belongs to the monovalent cation:proton antiporter 2 (CPA2) transporter (TC 2.A.37) family. CHX (TC 2.A.37.4) subfamily. As to expression, preferentially expressed in pollen but also detected in vegetative tissues like leaf trichomes and root vascular tissues.

The protein resides in the membrane. Its function is as follows. May operate as a cation/H(+) antiporter. The protein is Cation/H(+) antiporter 14 (CHX14) of Arabidopsis thaliana (Mouse-ear cress).